The chain runs to 995 residues: Pheromone-regulated membrane protein 10 (995 aa).

4 disordered regions span residues 1–217 (MSSH…GEKH), 253–299 (GRVL…AVEM), 326–407 (DQSF…YIAP), and 425–508 (NPQD…NPDQ). The span at 74-88 (SNSSTTNNSTESSGS) shows a compositional bias: low complexity. Over residues 110-121 (VKGESGDAHEGS) the composition is skewed to basic and acidic residues. A compositionally biased stretch (low complexity) spans 157–166 (SRGSVGSSSS). A compositionally biased stretch (basic and acidic residues) spans 170–187 (KGSDDVNEKETNLDHDYD). Positions 259 to 269 (GSGGGGGGGLI) are enriched in gly residues. Residues 283–296 (EEKEVGGGGEDDGA) are compositionally biased toward acidic residues. Over residues 326 to 347 (DQSFTYDEPNQSAGSSRNSTAP) the composition is skewed to polar residues. Composition is skewed to basic and acidic residues over residues 359–371 (DDHKHTDDEDQGK) and 385–396 (GNDDPEDQHLLL). Residues 495–506 (EADDEDEDEENP) are compositionally biased toward acidic residues. Transmembrane regions (helical) follow at residues 678 to 698 (VFLYGFGSAMVCPFAFGGGWL), 700 to 720 (IPVTFGVGLCVGYLQFFVSSM), 726 to 746 (SVFEITASIVVSFIARGIGSI), 752 to 772 (FCFSAIAQGSLALILPGYIIL), 794 to 814 (IIYSLFLGFGITLGAALFGWV), 833 to 850 (KYRILFVPMFTICLGLIN), 858 to 878 (PVMMVISCTGYVGTYFAGKHF), 881 to 901 (VPEFTAAIGAFIVGILGNVYS), 906 to 926 (GMAVSAMLPAIFVQVPSGIAS), and 965 to 985 (VEVSIGISVGLFAAALVVYPF).

It belongs to the ThrE exporter (TC 2.A.79) family.

The protein localises to the membrane. The polypeptide is Pheromone-regulated membrane protein 10 (Pichia sorbitophila (strain ATCC MYA-4447 / BCRC 22081 / CBS 7064 / NBRC 10061 / NRRL Y-12695) (Hybrid yeast)).